We begin with the raw amino-acid sequence, 216 residues long: Probable transaldolase (216 aa).

Lys84 acts as the Schiff-base intermediate with substrate in catalysis.

The protein belongs to the transaldolase family. Type 3B subfamily.

The protein localises to the cytoplasm. The enzyme catalyses D-sedoheptulose 7-phosphate + D-glyceraldehyde 3-phosphate = D-erythrose 4-phosphate + beta-D-fructose 6-phosphate. It functions in the pathway carbohydrate degradation; pentose phosphate pathway; D-glyceraldehyde 3-phosphate and beta-D-fructose 6-phosphate from D-ribose 5-phosphate and D-xylulose 5-phosphate (non-oxidative stage): step 2/3. Functionally, transaldolase is important for the balance of metabolites in the pentose-phosphate pathway. The protein is Probable transaldolase of Exiguobacterium sp. (strain ATCC BAA-1283 / AT1b).